A 594-amino-acid chain; its full sequence is DNA ligase (594 aa).

E280 is a binding site for ATP. Catalysis depends on K282, which acts as the N6-AMP-lysine intermediate. The ATP site is built by R287, R316, E345, F385, R456, and K462.

This sequence belongs to the ATP-dependent DNA ligase family. It depends on Mg(2+) as a cofactor.

It catalyses the reaction ATP + (deoxyribonucleotide)n-3'-hydroxyl + 5'-phospho-(deoxyribonucleotide)m = (deoxyribonucleotide)n+m + AMP + diphosphate.. In terms of biological role, DNA ligase that seals nicks in double-stranded DNA during DNA replication, DNA recombination and DNA repair. The chain is DNA ligase from Halorubrum lacusprofundi (strain ATCC 49239 / DSM 5036 / JCM 8891 / ACAM 34).